Consider the following 232-residue polypeptide: Phosphatidylserine decarboxylase proenzyme (232 aa).

Catalysis depends on serine 190, which acts as the Schiff-base intermediate with substrate; via pyruvic acid. Serine 190 carries the post-translational modification Pyruvic acid (Ser); by autocatalysis.

This sequence belongs to the phosphatidylserine decarboxylase family. PSD-A subfamily. As to quaternary structure, heterodimer of a large membrane-associated beta subunit and a small pyruvoyl-containing alpha subunit. Pyruvate is required as a cofactor. In terms of processing, is synthesized initially as an inactive proenzyme. Formation of the active enzyme involves a self-maturation process in which the active site pyruvoyl group is generated from an internal serine residue via an autocatalytic post-translational modification. Two non-identical subunits are generated from the proenzyme in this reaction, and the pyruvate is formed at the N-terminus of the alpha chain, which is derived from the carboxyl end of the proenzyme. The post-translation cleavage follows an unusual pathway, termed non-hydrolytic serinolysis, in which the side chain hydroxyl group of the serine supplies its oxygen atom to form the C-terminus of the beta chain, while the remainder of the serine residue undergoes an oxidative deamination to produce ammonia and the pyruvoyl prosthetic group on the alpha chain.

The protein localises to the cell membrane. It catalyses the reaction a 1,2-diacyl-sn-glycero-3-phospho-L-serine + H(+) = a 1,2-diacyl-sn-glycero-3-phosphoethanolamine + CO2. Its pathway is phospholipid metabolism; phosphatidylethanolamine biosynthesis; phosphatidylethanolamine from CDP-diacylglycerol: step 2/2. In terms of biological role, catalyzes the formation of phosphatidylethanolamine (PtdEtn) from phosphatidylserine (PtdSer). The sequence is that of Phosphatidylserine decarboxylase proenzyme from Mesorhizobium japonicum (strain LMG 29417 / CECT 9101 / MAFF 303099) (Mesorhizobium loti (strain MAFF 303099)).